The chain runs to 185 residues: Ovomucoid (185 aa).

3 Kazal-like domains span residues 1–63 (VEVD…ECRE), 64–128 (AVPM…ECRK), and 131–185 (AAVS…FGKC). Intrachain disulfides connect cysteine 5/cysteine 43, cysteine 22/cysteine 40, cysteine 30/cysteine 61, cysteine 69/cysteine 108, cysteine 86/cysteine 105, cysteine 94/cysteine 126, cysteine 137/cysteine 167, cysteine 145/cysteine 164, and cysteine 153/cysteine 185. N-linked (GlcNAc...) asparagine glycosylation occurs at asparagine 174.

Its subcellular location is the secreted. The sequence is that of Ovomucoid from Meleagris gallopavo (Wild turkey).